A 137-amino-acid chain; its full sequence is Transcription antitermination protein NusB (137 aa).

It belongs to the NusB family.

Its function is as follows. Involved in transcription antitermination. Required for transcription of ribosomal RNA (rRNA) genes. Binds specifically to the boxA antiterminator sequence of the ribosomal RNA (rrn) operons. In Clavibacter sepedonicus (Clavibacter michiganensis subsp. sepedonicus), this protein is Transcription antitermination protein NusB.